The chain runs to 353 residues: Probable arabinan endo-1,5-alpha-L-arabinosidase B (353 aa).

Positions 1-16 (MVLVATLFSLFTVSLC) are cleaved as a signal peptide. Asp-39 serves as the catalytic Proton acceptor. An N-linked (GlcNAc...) asparagine glycan is attached at Asn-194. A disordered region spans residues 202-227 (HLAKHPKTERVNSQDQNPDPLCRDSS). Glu-233 functions as the Proton donor in the catalytic mechanism.

This sequence belongs to the glycosyl hydrolase 43 family.

It is found in the secreted. It catalyses the reaction Endohydrolysis of (1-&gt;5)-alpha-arabinofuranosidic linkages in (1-&gt;5)-arabinans.. It participates in glycan metabolism; L-arabinan degradation. Functionally, endo-1,5-alpha-L-arabinanase involved in degradation of pectin. Its preferred substrate is linear 1,5-alpha-L-arabinan. The protein is Probable arabinan endo-1,5-alpha-L-arabinosidase B (abnB) of Aspergillus oryzae (strain ATCC 42149 / RIB 40) (Yellow koji mold).